Here is a 398-residue protein sequence, read N- to C-terminus: Cathepsin D (398 aa).

An N-terminal signal peptide occupies residues 1–20; the sequence is MAPRGLLVLLLLALVGPCAA. A propeptide spans 21–63 (activation peptide); the sequence is LIRIPLTKFTSTRRMLTEVGSEIPDMNAITQFLKFKLGFADLA. The region spanning 78 to 395 is the Peptidase A1 domain; the sequence is YYGEIGIGTP…DRDNDSVGFA (318 aa). D96 is a catalytic residue. An intrachain disulfide couples C109 to C116. N-linked (GlcNAc...) asparagine glycans are attached at residues N133 and N251. A disulfide bridge links C274 with C278. Residue D283 is part of the active site. C317 and C354 are joined by a disulfide.

It belongs to the peptidase A1 family. In terms of assembly, consists of a light chain and a heavy chain. Oocytic yolk, preovulatory follicles, liver.

Its subcellular location is the lysosome. The enzyme catalyses Specificity similar to, but narrower than, that of pepsin A. Does not cleave the 4-Gln-|-His-5 bond in B chain of insulin.. Acid protease active in intracellular protein breakdown. In chicken it is a key enzyme for yolk formation as it is capable of catalyzing intra oocytic break down of protein components of both vitellogenin and VLDL. The polypeptide is Cathepsin D (CTSD) (Gallus gallus (Chicken)).